The chain runs to 916 residues: Probable serine/threonine-protein kinase DDB_G0267514 (916 aa).

Disordered regions lie at residues 283-311, 461-518, and 550-646; these read SGGG…SGGS, NNNQ…SPLD, and FNNQ…EPPS. 2 stretches are compositionally biased toward low complexity: residues 461–493 and 550–622; these read NNNQ…QQQP and FNNQ…LINN. A compositionally biased stretch (polar residues) spans 623–646; it reads HSPNQYNNQGNILKNSGSVVEPPS. Residues 662-916 form the Protein kinase domain; the sequence is LKISSKLGEG…EILNLLNEIP (255 aa). Residues 668-676 and K689 each bind ATP; that span reads LGEGTFGVV. D784 functions as the Proton acceptor in the catalytic mechanism.

This sequence belongs to the protein kinase superfamily. TKL Ser/Thr protein kinase family.

The enzyme catalyses L-seryl-[protein] + ATP = O-phospho-L-seryl-[protein] + ADP + H(+). The catalysed reaction is L-threonyl-[protein] + ATP = O-phospho-L-threonyl-[protein] + ADP + H(+). This Dictyostelium discoideum (Social amoeba) protein is Probable serine/threonine-protein kinase DDB_G0267514.